The sequence spans 77 residues: Large ribosomal subunit protein eL14 (77 aa).

The protein belongs to the eukaryotic ribosomal protein eL14 family.

This chain is Large ribosomal subunit protein eL14, found in Methanococcus maripaludis (strain C7 / ATCC BAA-1331).